The chain runs to 312 residues: Methionyl-tRNA formyltransferase (312 aa).

109 to 112 (SLLP) is a (6S)-5,6,7,8-tetrahydrofolate binding site.

The protein belongs to the Fmt family.

The catalysed reaction is L-methionyl-tRNA(fMet) + (6R)-10-formyltetrahydrofolate = N-formyl-L-methionyl-tRNA(fMet) + (6S)-5,6,7,8-tetrahydrofolate + H(+). In terms of biological role, attaches a formyl group to the free amino group of methionyl-tRNA(fMet). The formyl group appears to play a dual role in the initiator identity of N-formylmethionyl-tRNA by promoting its recognition by IF2 and preventing the misappropriation of this tRNA by the elongation apparatus. The chain is Methionyl-tRNA formyltransferase from Nitrosospira multiformis (strain ATCC 25196 / NCIMB 11849 / C 71).